The primary structure comprises 359 residues: MAADGKNVLIMAGGTGGHVFPALACAREFQARGYSVHWLGTPRGIENELVPQAGLPLHLIQVSGLRGKGKLSLLKAPFTLIKAVLQARRIIRQLKPVCVLGFGGYVTGPGGVAARLCGVPLVIHEQNARAGTANRLLVPLSARVCEAFPNTFEASDKRRTTGNPVRPELFMDAQRAPLAERRARLLVLGGSLGAEPLNKLLPKALSEVPAGLRPEVFHQAGKQHAPITAERYHEAGVAAQVEPFIKDMAQAYGWADMVVCRAGALTVSELAAAGLPSMLVPLPHAIDDHQTHNAQYLAREGAAFLMPQATTGAAQLAERLNEVLMQPEKLNVMAGTARRLAKPAATSTVVDICLEVAHG.

UDP-N-acetyl-alpha-D-glucosamine is bound by residues 15 to 17 (TGG), N127, R166, S191, I245, 264 to 269 (ALTVSE), and Q290.

The protein belongs to the glycosyltransferase 28 family. MurG subfamily.

It is found in the cell inner membrane. The catalysed reaction is di-trans,octa-cis-undecaprenyl diphospho-N-acetyl-alpha-D-muramoyl-L-alanyl-D-glutamyl-meso-2,6-diaminopimeloyl-D-alanyl-D-alanine + UDP-N-acetyl-alpha-D-glucosamine = di-trans,octa-cis-undecaprenyl diphospho-[N-acetyl-alpha-D-glucosaminyl-(1-&gt;4)]-N-acetyl-alpha-D-muramoyl-L-alanyl-D-glutamyl-meso-2,6-diaminopimeloyl-D-alanyl-D-alanine + UDP + H(+). It participates in cell wall biogenesis; peptidoglycan biosynthesis. Functionally, cell wall formation. Catalyzes the transfer of a GlcNAc subunit on undecaprenyl-pyrophosphoryl-MurNAc-pentapeptide (lipid intermediate I) to form undecaprenyl-pyrophosphoryl-MurNAc-(pentapeptide)GlcNAc (lipid intermediate II). This chain is UDP-N-acetylglucosamine--N-acetylmuramyl-(pentapeptide) pyrophosphoryl-undecaprenol N-acetylglucosamine transferase, found in Pseudomonas putida (strain GB-1).